The chain runs to 378 residues: C-X-C chemokine receptor type 3-2 (378 aa).

Residues methionine 1–proline 47 are Extracellular-facing. 2 N-linked (GlcNAc...) asparagine glycosylation sites follow: asparagine 3 and asparagine 19. A helical transmembrane segment spans residues valine 48–isoleucine 68. The Cytoplasmic portion of the chain corresponds to arginine 69–threonine 86. The chain crosses the membrane as a helical span at residues phenylalanine 87–valine 107. Residues glutamate 108–lysine 121 lie on the Extracellular side of the membrane. Cysteines 120 and 199 form a disulfide. The helical transmembrane segment at isoleucine 122–serine 142 threads the bilayer. Over phenylalanine 143 to alanine 164 the chain is Cytoplasmic. The helical transmembrane segment at glutamine 165–phenylalanine 185 threads the bilayer. Residues arginine 186–glutamine 212 lie on the Extracellular side of the membrane. A helical membrane pass occupies residues isoleucine 213–tyrosine 233. Over cysteine 234–serine 253 the chain is Cytoplasmic. Residues leucine 254–leucine 274 form a helical membrane-spanning segment. Residues arginine 275–glutamate 304 are Extracellular-facing. The chain crosses the membrane as a helical span at residues serine 305–phenylalanine 325. Over arginine 326 to alanine 378 the chain is Cytoplasmic.

The protein belongs to the G-protein coupled receptor 1 family.

The protein localises to the cell membrane. Receptor for the C-X-C chemokines cxcl11.1 and cxcl11.6. Promotes macrophage chemotaxis to sites of bacterial infection. The protein is C-X-C chemokine receptor type 3-2 of Danio rerio (Zebrafish).